Consider the following 367-residue polypeptide: UDP-N-acetylglucosamine--N-acetylmuramyl-(pentapeptide) pyrophosphoryl-undecaprenol N-acetylglucosamine transferase (367 aa).

Residues 10–12, Asn-124, Ser-196, and Gln-300 contribute to the UDP-N-acetyl-alpha-D-glucosamine site; that span reads TGG.

Belongs to the glycosyltransferase 28 family. MurG subfamily.

It is found in the cell membrane. The catalysed reaction is di-trans,octa-cis-undecaprenyl diphospho-N-acetyl-alpha-D-muramoyl-L-alanyl-D-glutamyl-meso-2,6-diaminopimeloyl-D-alanyl-D-alanine + UDP-N-acetyl-alpha-D-glucosamine = di-trans,octa-cis-undecaprenyl diphospho-[N-acetyl-alpha-D-glucosaminyl-(1-&gt;4)]-N-acetyl-alpha-D-muramoyl-L-alanyl-D-glutamyl-meso-2,6-diaminopimeloyl-D-alanyl-D-alanine + UDP + H(+). It participates in cell wall biogenesis; peptidoglycan biosynthesis. Functionally, cell wall formation. Catalyzes the transfer of a GlcNAc subunit on undecaprenyl-pyrophosphoryl-MurNAc-pentapeptide (lipid intermediate I) to form undecaprenyl-pyrophosphoryl-MurNAc-(pentapeptide)GlcNAc (lipid intermediate II). The polypeptide is UDP-N-acetylglucosamine--N-acetylmuramyl-(pentapeptide) pyrophosphoryl-undecaprenol N-acetylglucosamine transferase (Natranaerobius thermophilus (strain ATCC BAA-1301 / DSM 18059 / JW/NM-WN-LF)).